Reading from the N-terminus, the 205-residue chain is Large ribosomal subunit protein uL4 (205 aa).

The tract at residues 43-97 (GKRQGTSKVKNRSAVRGGGKKPWRQKGTGRARQGSIRAPQWRGGGTVFGPTPRSY) is disordered. The span at 51–71 (VKNRSAVRGGGKKPWRQKGTG) shows a compositional bias: basic residues.

It belongs to the universal ribosomal protein uL4 family. As to quaternary structure, part of the 50S ribosomal subunit.

In terms of biological role, one of the primary rRNA binding proteins, this protein initially binds near the 5'-end of the 23S rRNA. It is important during the early stages of 50S assembly. It makes multiple contacts with different domains of the 23S rRNA in the assembled 50S subunit and ribosome. Its function is as follows. Forms part of the polypeptide exit tunnel. The sequence is that of Large ribosomal subunit protein uL4 from Lactobacillus acidophilus (strain ATCC 700396 / NCK56 / N2 / NCFM).